Here is a 323-residue protein sequence, read N- to C-terminus: Sphingolipid delta(4)-desaturase/C4-monooxygenase DES2 (323 aa).

The N-myristoyl glycine moiety is linked to residue glycine 2. Transmembrane regions (helical) follow at residues tryptophan 45–alanine 65 and tryptophan 68–isoleucine 88. The Histidine box-1 motif lies at histidine 89–histidine 93. The required for C4-hydroxylase activity stretch occupies residues alanine 95–threonine 99. Positions histidine 128–histidine 132 match the Histidine box-2 motif. A helical membrane pass occupies residues valine 210–alanine 231. Positions histidine 259–histidine 263 match the Histidine box-3 motif.

This sequence belongs to the fatty acid desaturase type 1 family. DEGS subfamily. Highly expressed in skin, intestine and kidney.

The protein localises to the endoplasmic reticulum membrane. The enzyme catalyses a dihydroceramide + 2 Fe(II)-[cytochrome b5] + O2 + 2 H(+) = a phytoceramide + 2 Fe(III)-[cytochrome b5] + H2O. It catalyses the reaction an N-acylsphinganine + 2 Fe(II)-[cytochrome b5] + O2 + 2 H(+) = an N-acylsphing-4-enine + 2 Fe(III)-[cytochrome b5] + 2 H2O. It carries out the reaction N-octanoylsphinganine + 2 Fe(II)-[cytochrome b5] + O2 + 2 H(+) = N-octanoyl-4-hydroxysphinganine + 2 Fe(III)-[cytochrome b5] + H2O. The catalysed reaction is an N-acylsphinganine + 2 Fe(II)-[cytochrome b5] + O2 + 2 H(+) = an N-acyl-(4R)-4-hydroxysphinganine + 2 Fe(III)-[cytochrome b5] + H2O. It functions in the pathway membrane lipid metabolism; sphingolipid biosynthesis. Its function is as follows. Bifunctional enzyme which acts both as a sphingolipid delta(4)-desaturase and a sphingolipid C4-monooxygenase. This Homo sapiens (Human) protein is Sphingolipid delta(4)-desaturase/C4-monooxygenase DES2.